Here is a 915-residue protein sequence, read N- to C-terminus: Phototropin-2 (915 aa).

Pro residues predominate over residues 1–10 (MERPRAPPSP). Disordered regions lie at residues 1–62 (MERP…EFQD) and 84–118 (DDGI…GAFP). 2 positions are modified to phosphoserine: serine 9 and serine 22. Positions 27–43 (NPSSGKETHGSTSSSSK) are enriched in polar residues. Residues 93–107 (SEVERSKNMSRRSSE) show a composition bias toward basic and acidic residues. Residues 120-193 (VSQELKTALS…AKIRDCVKNG (74 aa)) enclose the PAS 1 domain. Serine 121 is modified (phosphoserine). Residue asparagine 169 participates in FMN binding. S-4a-FMN cysteine is present on cysteine 170. 7 residues coordinate FMN: arginine 171, glutamine 174, arginine 187, asparagine 202, asparagine 212, glutamine 233, and lysine 238. A PAC 1 domain is found at 194–248 (KSYCGRLLNYKKDGTPFWNLLTVTPIKDDQGNTIKFIGMQVEVSKYTEGVNDKAL). The segment at 281–344 (HRKSQVQESV…KSSNNRHEDL (64 aa)) is disordered. Polar residues-rich tracts occupy residues 286–310 (VQES…GRQT) and 325–337 (RVST…LKSS). Phosphoserine is present on serine 364. In terms of domain architecture, PAS 2 spans 376–449 (QGIDLATTLE…QKIRDAIRDQ (74 aa)). Position 425 (asparagine 425) interacts with FMN. Residue cysteine 426 is modified to S-4a-FMN cysteine. Arginine 427, glutamine 430, arginine 443, asparagine 458, asparagine 468, phenylalanine 470, and glutamine 489 together coordinate FMN. In terms of domain architecture, PAC 2 spans 450–504 (REITVQLINYTKSGKKFWNLFHLQPMRDQKGELQYFIGVQLDGSDHVEPLQNRLS). The region spanning 577-864 (FKPIKPLGSG…ANEIKQHAFF (288 aa)) is the Protein kinase domain. ATP-binding positions include 583-591 (LGSGDTGSV) and lysine 606. Aspartate 702 serves as the catalytic Proton acceptor. The segment at 720 to 774 (DFDLSFMTTCTPQLIIPAAPSKRRRSKSQPLPTFVAEPSTQSNSFVGTEEYIAPE) is activation loop.

Belongs to the protein kinase superfamily. AGC Ser/Thr protein kinase family. In terms of assembly, homodimer. Interacts with PKS1, PKS2, RPT3 and PHOT1. Associates with CBC1 and CBC2. Binds to BHP. The cofactor is FMN. Post-translationally, autophosphorylated in response to blue light irradiation. 2 molecules of FMN bind covalently to cysteines after exposure to blue light and are reversed in the dark. As to expression, expressed in leaves, stems and flowers, and to a lower extent in roots. Present in guard cells (at protein level).

The protein localises to the cell membrane. The enzyme catalyses L-seryl-[protein] + ATP = O-phospho-L-seryl-[protein] + ADP + H(+). It catalyses the reaction L-threonyl-[protein] + ATP = O-phospho-L-threonyl-[protein] + ADP + H(+). Autophosphorylation is inhibited by staurosporine, but not by tyrphostin 9, sphingosine, GW5074 and BML-265. In terms of biological role, protein kinase that acts as a blue light photoreceptor in a signal-transduction pathway for photo-induced movements. Triggers the phosphorylation of AHA1 and AHA2 C-terminal penultimate Thr in guard cells to activate them and induce stomatal opening in response to blue light (BL). Also phosphorylates BLUS1, a kinase involved in stomatal opening. Mediates calcium spiking of extra- and intracellular origins in response to blue light. Involved in hypocotyl phototropism. Contributes to the chloroplast accumulation in low blue light and mediates their translocation (avoidance response) at high fluence. Regulates stomata opening and photomorphogenesis response of leaf tissue. Not involved in hypocotyl elongation inhibition, anthocyanin accumulation or cotyledon opening. The protein is Phototropin-2 of Arabidopsis thaliana (Mouse-ear cress).